Here is a 273-residue protein sequence, read N- to C-terminus: Pantothenate synthetase (273 aa).

ATP is bound at residue 27–34 (MGALHQGH). The Proton donor role is filled by histidine 34. Glutamine 58 provides a ligand contact to (R)-pantoate. Position 58 (glutamine 58) interacts with beta-alanine. 144 to 147 (GKKD) is a binding site for ATP. Glutamine 150 serves as a coordination point for (R)-pantoate. Residues valine 173 and 181-184 (LSSR) contribute to the ATP site.

The protein belongs to the pantothenate synthetase family. As to quaternary structure, homodimer.

It is found in the cytoplasm. It catalyses the reaction (R)-pantoate + beta-alanine + ATP = (R)-pantothenate + AMP + diphosphate + H(+). Its pathway is cofactor biosynthesis; (R)-pantothenate biosynthesis; (R)-pantothenate from (R)-pantoate and beta-alanine: step 1/1. Functionally, catalyzes the condensation of pantoate with beta-alanine in an ATP-dependent reaction via a pantoyl-adenylate intermediate. The polypeptide is Pantothenate synthetase (Nitratiruptor sp. (strain SB155-2)).